We begin with the raw amino-acid sequence, 411 residues long: Na(+)-translocating NADH-quinone reductase subunit B (411 aa).

3 helical membrane passes run 56–76 (MMIT…YNVG), 120–140 (ALGA…CTIW), and 166–186 (IVPP…GIIV). Position 233 is an FMN phosphoryl threonine (threonine 233). The next 5 membrane-spanning stretches (helical) occupy residues 272–292 (VSTL…IAAW), 294–314 (IIAG…LIGS), 319–339 (MFSM…GMVF), 348–368 (SFTN…AVLI), and 378–398 (GMML…YIVV).

This sequence belongs to the NqrB/RnfD family. In terms of assembly, composed of six subunits; NqrA, NqrB, NqrC, NqrD, NqrE and NqrF. Requires FMN as cofactor.

Its subcellular location is the cell inner membrane. It catalyses the reaction a ubiquinone + n Na(+)(in) + NADH + H(+) = a ubiquinol + n Na(+)(out) + NAD(+). Functionally, NQR complex catalyzes the reduction of ubiquinone-1 to ubiquinol by two successive reactions, coupled with the transport of Na(+) ions from the cytoplasm to the periplasm. NqrA to NqrE are probably involved in the second step, the conversion of ubisemiquinone to ubiquinol. This is Na(+)-translocating NADH-quinone reductase subunit B from Haemophilus influenzae (strain 86-028NP).